The primary structure comprises 55 residues: Large ribosomal subunit protein bL33A (55 aa).

The protein belongs to the bacterial ribosomal protein bL33 family.

This chain is Large ribosomal subunit protein bL33A, found in Rhodococcus jostii (strain RHA1).